The primary structure comprises 119 residues: Large ribosomal subunit protein bL17 (119 aa).

It belongs to the bacterial ribosomal protein bL17 family. As to quaternary structure, part of the 50S ribosomal subunit. Contacts protein L32.

The polypeptide is Large ribosomal subunit protein bL17 (Mycoplasma mycoides subsp. mycoides SC (strain CCUG 32753 / NCTC 10114 / PG1)).